The chain runs to 124 residues: Fluoride-specific ion channel FluC (124 aa).

4 helical membrane-spanning segments follow: residues 4-24 (VLFV…ISLL), 35-55 (FGTL…FALG), 62-82 (PEFK…FSTF), and 95-115 (LVKA…VVYL). The Na(+) site is built by glycine 74 and threonine 77.

This sequence belongs to the fluoride channel Fluc/FEX (TC 1.A.43) family.

The protein localises to the cell inner membrane. The enzyme catalyses fluoride(in) = fluoride(out). With respect to regulation, na(+) is not transported, but it plays an essential structural role and its presence is essential for fluoride channel function. Functionally, fluoride-specific ion channel. Important for reducing fluoride concentration in the cell, thus reducing its toxicity. This Shewanella pealeana (strain ATCC 700345 / ANG-SQ1) protein is Fluoride-specific ion channel FluC.